A 249-amino-acid polypeptide reads, in one-letter code: Uridylate kinase (249 aa).

Position 15–18 (15–18) interacts with ATP; that stretch reads KLSG. Positions 23–28 are involved in allosteric activation by GTP; it reads GEEGFG. Residue Gly57 participates in UMP binding. The ATP site is built by Gly58 and Arg62. Residues Asp77 and 138–145 contribute to the UMP site; that span reads TGNPFFTT. Positions 165, 171, and 174 each coordinate ATP.

This sequence belongs to the UMP kinase family. As to quaternary structure, homohexamer.

Its subcellular location is the cytoplasm. It carries out the reaction UMP + ATP = UDP + ADP. Its pathway is pyrimidine metabolism; CTP biosynthesis via de novo pathway; UDP from UMP (UMPK route): step 1/1. With respect to regulation, allosterically activated by GTP. Inhibited by UTP. Functionally, catalyzes the reversible phosphorylation of UMP to UDP. The protein is Uridylate kinase of Psychromonas ingrahamii (strain DSM 17664 / CCUG 51855 / 37).